A 323-amino-acid chain; its full sequence is MKTTFLDFEQQIAELESKIEELRFVQDESSVDISDEIKTLSEKSLQLTKDIYANLTPWQVSQVARHPQRPYTLDYVGGLFTDFHELHGDRTFADDQSIIGGLARFDSQPCMVIGHQKGRDTKERALRNFGMSRPEGYRKAMRLMRLAEKFSIPVFTFVDTPGAFPGIDAEERNQSEAIGRNLYVQAELTVPIIATIIGEGGSGGALAIAMGDVVLMLQNSTYSVISPEGCASILWKTADKASEAAEQLGLTAQRIKALGLIDKIVAEPIGGAHRDYDVMMANMRKALSDSLKTFDGMKEDALLERRHERLMSYGKFKEITVKA.

Positions 40–293 (LSEKSLQLTK…RKALSDSLKT (254 aa)) constitute a CoA carboxyltransferase C-terminal domain.

Belongs to the AccA family. In terms of assembly, acetyl-CoA carboxylase is a heterohexamer composed of biotin carboxyl carrier protein (AccB), biotin carboxylase (AccC) and two subunits each of ACCase subunit alpha (AccA) and ACCase subunit beta (AccD).

The protein localises to the cytoplasm. The catalysed reaction is N(6)-carboxybiotinyl-L-lysyl-[protein] + acetyl-CoA = N(6)-biotinyl-L-lysyl-[protein] + malonyl-CoA. It participates in lipid metabolism; malonyl-CoA biosynthesis; malonyl-CoA from acetyl-CoA: step 1/1. Its function is as follows. Component of the acetyl coenzyme A carboxylase (ACC) complex. First, biotin carboxylase catalyzes the carboxylation of biotin on its carrier protein (BCCP) and then the CO(2) group is transferred by the carboxyltransferase to acetyl-CoA to form malonyl-CoA. The protein is Acetyl-coenzyme A carboxylase carboxyl transferase subunit alpha of Polynucleobacter asymbioticus (strain DSM 18221 / CIP 109841 / QLW-P1DMWA-1) (Polynucleobacter necessarius subsp. asymbioticus).